Reading from the N-terminus, the 1063-residue chain is Exportin-1 (1063 aa).

In terms of domain architecture, Importin N-terminal spans 43 to 109; that stretch reads AQSILTTLKE…KKYVVSLIIK (67 aa). The disordered stretch occupies residues 1034–1063; sequence AEEQSNKHQMQRNIPGMLNPHELPEDMQDE.

It belongs to the exportin family. As to quaternary structure, interacts with Clbn (via its N-terminus). Associates with the nuclear pore complex via interaction with mbo and Nup214. Interacts with target proteins containing NES sequences such as actin and dl. As to expression, high expression observed in the developing embryonic brain, hind gut and posterior spiracles shortly before dorsal closure; and in the ventral nerve cord, midgut and somatic musculature shortly after dorsal closure. Expression increases when the tissue is well developed.

Its subcellular location is the nucleus. It localises to the nucleus membrane. In terms of biological role, receptor for the leucine-rich nuclear export signal (NES). Binds cooperatively to the NES on its target protein and to the small GTPase Ran in its active GTP-bound form. Involved in the export of dl, RpS2 and the pre-40S ribosome from the nucleus to the cytoplasm. Plays an important role in nuclear pore assembly by mediating nucleoporin condensation and biogenesis of annulate lamellae. Required for the function or maintenance of certain tissues such as brain and gut. In Drosophila melanogaster (Fruit fly), this protein is Exportin-1.